A 163-amino-acid polypeptide reads, in one-letter code: Bursicon (163 aa).

An N-terminal signal peptide occupies residues 1 to 23 (MKSTFLVVLELAFFLLPGRVLYA). 5 disulfides stabilise this stretch: cysteine 39-cysteine 88, cysteine 53-cysteine 102, cysteine 63-cysteine 123, cysteine 67-cysteine 125, and cysteine 85-cysteine 128. In terms of domain architecture, CTCK spans 39-129 (CQVTPVIHVL…PLECMCRPCT (91 aa)).

In terms of assembly, heterodimer of burs and pburs.

Its subcellular location is the secreted. Its function is as follows. Final heterodimeric neurohormone released at the end of the molting cycle, involved in the sclerotization (tanning) of the insect cuticle, melanization and wing spreading. This is Bursicon (burs124) from Anopheles gambiae (African malaria mosquito).